The following is a 107-amino-acid chain: Lipid-anchored protein YDL012C (107 aa).

The span at 1–18 shows a compositional bias: polar residues; the sequence is MSAQDYYGNSASKQSYSR. The tract at residues 1 to 86 is disordered; the sequence is MSAQDYYGNS…VQQQPASSGN (86 aa). Position 2 is an N-acetylserine (serine 2). Lysine 13 participates in a covalent cross-link: Glycyl lysine isopeptide (Lys-Gly) (interchain with G-Cter in ubiquitin). Residues 35–81 show a composition bias toward low complexity; it reads PSQSQQNYYPPQQQQQQYQQQPQYYQQQQPQYYQQHPQQPIYVQQQP.

This sequence belongs to the CYSTM1 family.

Its subcellular location is the cell membrane. In Saccharomyces cerevisiae (strain ATCC 204508 / S288c) (Baker's yeast), this protein is Lipid-anchored protein YDL012C.